A 251-amino-acid chain; its full sequence is Insertion sequence IS5376 putative ATP-binding protein (251 aa).

105-112 (GPPGIGKT) contacts ATP.

This sequence belongs to the IS21/IS1162 putative ATP-binding protein family.

The sequence is that of Insertion sequence IS5376 putative ATP-binding protein from Geobacillus stearothermophilus (Bacillus stearothermophilus).